A 365-amino-acid chain; its full sequence is Histidinol-phosphate aminotransferase (365 aa).

Position 220 is an N6-(pyridoxal phosphate)lysine (K220).

Belongs to the class-II pyridoxal-phosphate-dependent aminotransferase family. Histidinol-phosphate aminotransferase subfamily. As to quaternary structure, homodimer. It depends on pyridoxal 5'-phosphate as a cofactor.

It catalyses the reaction L-histidinol phosphate + 2-oxoglutarate = 3-(imidazol-4-yl)-2-oxopropyl phosphate + L-glutamate. It participates in amino-acid biosynthesis; L-histidine biosynthesis; L-histidine from 5-phospho-alpha-D-ribose 1-diphosphate: step 7/9. In Xylella fastidiosa (strain Temecula1 / ATCC 700964), this protein is Histidinol-phosphate aminotransferase (hisC).